A 547-amino-acid polypeptide reads, in one-letter code: Sesterfisheric acid synthase (547 aa).

A helical membrane pass occupies residues 19 to 39 (IMGCSLGTGLLVSMIIYNYFF). N-linked (GlcNAc...) asparagine glycans are attached at residues Asn341 and Asn404. Cys490 is a heme binding site.

This sequence belongs to the cytochrome P450 family. It depends on heme as a cofactor.

The protein localises to the membrane. The enzyme catalyses sesterfisherol + 3 reduced [NADPH--hemoprotein reductase] + 3 O2 = sesterfisherate + 3 oxidized [NADPH--hemoprotein reductase] + 4 H2O + 4 H(+). The protein operates within secondary metabolite biosynthesis; terpenoid biosynthesis. In terms of biological role, cytochrome P450 monooxygenase; part of the gene cluster that mediates the biosynthesis of sesterfisheric acid. The bifunctional terpene synthase NfSS converts DMAPP and IPP, and also GGPP, into sesterfisherol. The C-terminal prenyltransferase (PT) domain of NfSS catalyzes formation of GFPP, whereas the N-terminal terpene cyclase (TC) domain catalyzes the cyclization of GFPP to sesterfisherol. The cytochrome P450 monooxygenase NfP450 then catalyzes oxidative modifications of sesterfisherol into sesterfisheric acid. This is Sesterfisheric acid synthase from Neosartorya fischeri (strain ATCC 1020 / DSM 3700 / CBS 544.65 / FGSC A1164 / JCM 1740 / NRRL 181 / WB 181) (Aspergillus fischerianus).